Reading from the N-terminus, the 234-residue chain is Probable porphobilinogen deaminase (234 aa).

Belongs to the HMBS family.

It catalyses the reaction 4 porphobilinogen + H2O = hydroxymethylbilane + 4 NH4(+). It functions in the pathway porphyrin-containing compound metabolism; protoporphyrin-IX biosynthesis; coproporphyrinogen-III from 5-aminolevulinate: step 2/4. In terms of biological role, tetrapolymerization of the monopyrrole PBG into the hydroxymethylbilane pre-uroporphyrinogen in several discrete steps. The polypeptide is Probable porphobilinogen deaminase (hemC) (Chlamydia pneumoniae (Chlamydophila pneumoniae)).